The sequence spans 228 residues: Phosphoglycolate phosphatase 1 (228 aa).

The active-site Nucleophile is the Asp-8. Positions 8 and 10 each coordinate Mg(2+). Lys-149 is a binding site for substrate. Positions 172 and 176 each coordinate Mg(2+).

This sequence belongs to the archaeal SPP-like hydrolase family. Mg(2+) is required as a cofactor.

The catalysed reaction is 2-phosphoglycolate + H2O = glycolate + phosphate. Functionally, catalyzes the dephosphorylation of 2-phosphoglycolate. This chain is Phosphoglycolate phosphatase 1, found in Saccharolobus solfataricus (strain ATCC 35092 / DSM 1617 / JCM 11322 / P2) (Sulfolobus solfataricus).